Reading from the N-terminus, the 354-residue chain is MVSGVTYLKRGAVFGSGAFGTALACVLAKKCESVSVWHMNANEARVVNQKHENVYFLPGAPLPANLTFTADAEECAKGAEIVLFVIPTQFLRGFLQKNSHILRNHVVSRNVPVVMCSKGIERSSLLFPAQILEEFLPNYPIGVIAGPSFAIEVAKGMLTNVCTAAADINMARKIQRIMTTSDGSFRCWATTDVIGCEIASAMKNVLAIASGALKGLGTENNARAALISRGLLEIRDLTLALGGTGEAVFGLPGLGDLLLTCSSELSRNFTVGMKLGQGISLEEIKRTSKAVAEGVATAEPLERLAKKHNADLPICHEVYNVLYANGCAKRSFKKLNSCKLADEGLPALPRTSKM.

NAD(+) contacts are provided by residues 15–20 (GSGAFG), F90, K118, and A150. Substrate is bound at residue K118. K203 functions as the Proton acceptor in the catalytic mechanism. NAD(+) contacts are provided by R267 and E293. Residue 267 to 268 (RN) coordinates substrate. A Microbody targeting signal motif is present at residues 352–354 (SKM).

Belongs to the NAD-dependent glycerol-3-phosphate dehydrogenase family.

The protein localises to the glycosome. The catalysed reaction is sn-glycerol 3-phosphate + NAD(+) = dihydroxyacetone phosphate + NADH + H(+). This is Glycerol-3-phosphate dehydrogenase [NAD(+)], glycosomal (GPD) from Trypanosoma brucei brucei.